Here is a 316-residue protein sequence, read N- to C-terminus: tRNA dimethylallyltransferase (316 aa).

17–24 serves as a coordination point for ATP; the sequence is GPTASGKT. Substrate is bound at residue 19 to 24; sequence TASGKT. 3 interaction with substrate tRNA regions span residues 42–45, 166–170, and 247–252; these read DSAL, QRLSR, and RCVGYR.

Belongs to the IPP transferase family. In terms of assembly, monomer. The cofactor is Mg(2+).

The catalysed reaction is adenosine(37) in tRNA + dimethylallyl diphosphate = N(6)-dimethylallyladenosine(37) in tRNA + diphosphate. Its function is as follows. Catalyzes the transfer of a dimethylallyl group onto the adenine at position 37 in tRNAs that read codons beginning with uridine, leading to the formation of N6-(dimethylallyl)adenosine (i(6)A). This is tRNA dimethylallyltransferase from Klebsiella pneumoniae (strain 342).